We begin with the raw amino-acid sequence, 267 residues long: Proteasome subunit alpha (267 aa).

The interval 231–267 (ETLLQERDSKESAESEEPIESEEGKKTGKKSDADSSD) is disordered. Composition is skewed to basic and acidic residues over residues 234 to 243 (LQERDSKESA) and 252 to 267 (EEGK…DSSD).

The protein belongs to the peptidase T1A family. In terms of assembly, the 20S proteasome core is composed of 14 alpha and 14 beta subunits that assemble into four stacked heptameric rings, resulting in a barrel-shaped structure. The two inner rings, each composed of seven catalytic beta subunits, are sandwiched by two outer rings, each composed of seven alpha subunits. The catalytic chamber with the active sites is on the inside of the barrel. Has a gated structure, the ends of the cylinder being occluded by the N-termini of the alpha-subunits. Is capped by the proteasome-associated ATPase, ARC.

It localises to the cytoplasm. Its pathway is protein degradation; proteasomal Pup-dependent pathway. Its activity is regulated as follows. The formation of the proteasomal ATPase ARC-20S proteasome complex, likely via the docking of the C-termini of ARC into the intersubunit pockets in the alpha-rings, may trigger opening of the gate for substrate entry. Interconversion between the open-gate and close-gate conformations leads to a dynamic regulation of the 20S proteasome proteolysis activity. In terms of biological role, component of the proteasome core, a large protease complex with broad specificity involved in protein degradation. The polypeptide is Proteasome subunit alpha (Mycobacterium ulcerans (strain Agy99)).